Reading from the N-terminus, the 186-residue chain is Methylamine dehydrogenase light chain (186 aa).

Residues 1–57 (MLGKSQFDDLFEKMSRKVAGHTSRRGFIGRVGTAVAGVALVPLLPVDRRGRVSRANA) constitute a signal peptide (tat-type signal). 6 disulfide bridges follow: Cys-78–Cys-143, Cys-84–Cys-116, Cys-91–Cys-176, Cys-93–Cys-141, Cys-101–Cys-132, and Cys-133–Cys-164. Trp-112 carries the post-translational modification Tryptophylquinone. Positions 112–163 (WVASCYNPTDKQSYLISYRDCCGANVSGRCACLNTEGELPVYRPEFGNDIIW) form a cross-link, tryptophan tryptophylquinone (Trp-Trp).

This sequence belongs to the aromatic amine dehydrogenase light chain family. As to quaternary structure, heterotetramer of two light and two heavy chains. The cofactor is tryptophan tryptophylquinone residue. Predicted to be exported by the Tat system. The position of the signal peptide cleavage has been experimentally proven. In terms of processing, tryptophan tryptophylquinone (TTQ) is formed by oxidation of the indole ring of a tryptophan to form tryptophylquinone followed by covalent cross-linking with another tryptophan residue.

It localises to the periplasm. The enzyme catalyses 2 oxidized [amicyanin] + methylamine + H2O = 2 reduced [amicyanin] + formaldehyde + NH4(+) + 2 H(+). Its pathway is one-carbon metabolism; methylamine degradation; formaldehyde from methylamine: step 1/1. Its function is as follows. Methylamine dehydrogenase carries out the oxidation of methylamine. Electrons are passed from methylamine dehydrogenase to amicyanin. This Methylorubrum extorquens (strain ATCC 14718 / DSM 1338 / JCM 2805 / NCIMB 9133 / AM1) (Methylobacterium extorquens) protein is Methylamine dehydrogenase light chain (mauA).